Here is a 401-residue protein sequence, read N- to C-terminus: MTTQFSVADIELSLSRYPANQVSNLQAWDAADEHLIKHLKEIEQKADNTAVINDSFGALCAALTAQAADWPIWVETDAKTSQLGTLQNFNANRLSDSNLTWLNSRELPPQGINLVLMKLPKNLNYFIHQLQRLSQSLAPNTPVYIGAKAKSINKALLETIAKHLGPASASLAWKKTRVITCIADGKPRALPSEVSWAVKEFNLSISNLSNVFAANKLDIGARIMLDNLPEGHFDTIVDLGCGNGILGLRAKQCYPNAEVHFVDDSEMAITSARQNWQANKLDNPEQAKPQGHFHWDDCLTHLGDEVKPDLVLCNPPFHQGEAITDHIAWQMFLDAFHQLRPGGMLQVVGNRHLGYHVKLKRIFKNCETAASNGKFVILRAIKSAKEPVKPAKDVNEPDHQS.

The protein belongs to the methyltransferase superfamily. RlmG family.

It is found in the cytoplasm. It carries out the reaction guanosine(1835) in 23S rRNA + S-adenosyl-L-methionine = N(2)-methylguanosine(1835) in 23S rRNA + S-adenosyl-L-homocysteine + H(+). Functionally, specifically methylates the guanine in position 1835 (m2G1835) of 23S rRNA. In Shewanella loihica (strain ATCC BAA-1088 / PV-4), this protein is Ribosomal RNA large subunit methyltransferase G.